A 98-amino-acid chain; its full sequence is MNRPVFLVLLLTGFLCIAAQEANVAHHYCGRHLANTLADLCWDTSVEKRSESSLASYSSRGWPWLPTPNFNKRAIKKRGVVDECCIQPCTLDVLATYC.

Residues 1–19 form the signal peptide; sequence MNRPVFLVLLLTGFLCIAA. At Gln20 the chain carries Pyrrolidone carboxylic acid. Intrachain disulfides connect Cys29/Cys85, Cys41/Cys98, and Cys84/Cys89. Positions 50–75 are cleaved as a propeptide — c peptide like; that stretch reads SESSLASYSSRGWPWLPTPNFNKRAI.

It belongs to the insulin family. As to quaternary structure, heterodimer of a B chain and an A chain linked by two disulfide bonds.

It localises to the secreted. In terms of biological role, PTTH is a brain peptide responsible for activation of prothoracic glands to produce ecdysone in insects. This Bombyx mori (Silk moth) protein is Bombyxin E-1 (BBXE1).